A 668-amino-acid chain; its full sequence is DNA ligase (668 aa).

NAD(+)-binding positions include 31–35 (DAEYD), 80–81 (SL), and Glu-112. Lys-114 acts as the N6-AMP-lysine intermediate in catalysis. NAD(+) is bound by residues Arg-135, Glu-172, Lys-289, and Lys-313. Positions 407, 410, 425, and 431 each coordinate Zn(2+). In terms of domain architecture, BRCT spans 591–668 (SVPQPLAGKV…NEEQLIELLN (78 aa)).

It belongs to the NAD-dependent DNA ligase family. LigA subfamily. The cofactor is Mg(2+). Mn(2+) is required as a cofactor.

It carries out the reaction NAD(+) + (deoxyribonucleotide)n-3'-hydroxyl + 5'-phospho-(deoxyribonucleotide)m = (deoxyribonucleotide)n+m + AMP + beta-nicotinamide D-nucleotide.. DNA ligase that catalyzes the formation of phosphodiester linkages between 5'-phosphoryl and 3'-hydroxyl groups in double-stranded DNA using NAD as a coenzyme and as the energy source for the reaction. It is essential for DNA replication and repair of damaged DNA. This is DNA ligase from Aliivibrio fischeri (strain MJ11) (Vibrio fischeri).